The sequence spans 83 residues: Large ribosomal subunit protein bL31B (83 aa).

This sequence belongs to the bacterial ribosomal protein bL31 family. Type B subfamily. In terms of assembly, part of the 50S ribosomal subunit.

This Leifsonia xyli subsp. xyli (strain CTCB07) protein is Large ribosomal subunit protein bL31B.